We begin with the raw amino-acid sequence, 609 residues long: Phosphoprotein 85 (609 aa).

Residues 461–609 (QNEGRASSRA…RSTETNDERL (149 aa)) are disordered. The segment covering 465 to 478 (RASSRASSSHSTST) has biased composition (low complexity). Over residues 484–495 (PQSGRSTPTSIL) the composition is skewed to polar residues. Low complexity-rich tracts occupy residues 503–513 (SNSRSSSVSFS) and 552–563 (SPQSASSNNSMS). Over residues 600–609 (RSTETNDERL) the composition is skewed to basic and acidic residues.

This sequence belongs to the herpesviridae pp85 family. In terms of processing, phosphorylated.

The protein resides in the virion tegument. The protein localises to the host cytoplasm. The sequence is that of Phosphoprotein 85 (U14) from Homo sapiens (Human).